The chain runs to 147 residues: Acidic phospholipase A2 S7-48J (147 aa).

A signal peptide spans 1-19 (MYPAHLLVLLAVCVSLLGA). Residues 20–27 (SDIPPQPL) constitute a propeptide that is removed on maturation. 7 disulfides stabilise this stretch: Cys38-Cys99, Cys54-Cys146, Cys56-Cys72, Cys71-Cys127, Cys78-Cys120, Cys88-Cys113, and Cys106-Cys118. Ca(2+)-binding residues include Tyr55, Gly57, and Gly59. The active site involves His75. Asp76 is a binding site for Ca(2+). Asp121 is a catalytic residue.

It belongs to the phospholipase A2 family. Group I subfamily. D49 sub-subfamily. The cofactor is Ca(2+). Expressed by the venom gland.

It localises to the secreted. It catalyses the reaction a 1,2-diacyl-sn-glycero-3-phosphocholine + H2O = a 1-acyl-sn-glycero-3-phosphocholine + a fatty acid + H(+). Its function is as follows. Snake venom phospholipase A2 (PLA2) that inhibits collagen-induced platelet aggregation. PLA2 catalyzes the calcium-dependent hydrolysis of the 2-acyl groups in 3-sn-phosphoglycerides. The polypeptide is Acidic phospholipase A2 S7-48J (Austrelaps superbus (Lowland copperhead snake)).